Consider the following 383-residue polypeptide: DNA-directed RNA polymerase subunit alpha (383 aa).

The segment at 1–240 (MEKKTGLIQF…NLFHQISPPL (240 aa)) is alpha N-terminal domain (alpha-NTD). The alpha C-terminal domain (alpha-CTD) stretch occupies residues 306–383 (IDKQMNDSVN…RFNMELLPTK (78 aa)).

It belongs to the RNA polymerase alpha chain family. As to quaternary structure, in plastids the minimal PEP RNA polymerase catalytic core is composed of four subunits: alpha, beta, beta', and beta''. When a (nuclear-encoded) sigma factor is associated with the core the holoenzyme is formed, which can initiate transcription.

The protein localises to the plastid. It localises to the chloroplast. It catalyses the reaction RNA(n) + a ribonucleoside 5'-triphosphate = RNA(n+1) + diphosphate. Its function is as follows. DNA-dependent RNA polymerase catalyzes the transcription of DNA into RNA using the four ribonucleoside triphosphates as substrates. The sequence is that of DNA-directed RNA polymerase subunit alpha from Staurastrum punctulatum (Green alga).